The following is a 223-amino-acid chain: Protein-disulfide oxidoreductase DsbI (223 aa).

Residues 26–46 (LLWLLMAVAMGALIILAHSFF) form a helical membrane-spanning segment. A disulfide bridge connects residues C55 and C58. 2 helical membrane passes run 59–78 (VYIR…AAIN) and 82–102 (IILK…GLKF). C127 and C153 are disulfide-bonded. The helical transmembrane segment at 198 to 218 (CMLAFGMCLVLLVIMSGAWAL) threads the bilayer.

This sequence belongs to the DsbB family. DsbI subfamily. As to quaternary structure, interacts with DsbL.

The protein resides in the cell inner membrane. Its function is as follows. Required for disulfide bond formation in some proteins. Part of a redox system composed of DsbI and DsbL that mediates formation of an essential disulfide bond in AssT. This chain is Protein-disulfide oxidoreductase DsbI, found in Escherichia coli O1:K1 / APEC.